The sequence spans 314 residues: Secreted frizzled-related protein 1 (314 aa).

The signal sequence occupies residues 1 to 31; sequence MGVGRSARGRGGAASGVLLALAAALLAAGSA. Positions 53 to 169 constitute an FZ domain; it reads TKPPQCVDIP…FPEGDVCIAM (117 aa). Cystine bridges form between C58–C121, C68–C114, C105–C140, C129–C166, and C133–C157. N-linked (GlcNAc...) asparagine glycosylation is present at N173. 3 cysteine pairs are disulfide-bonded: C186/C256, C189/C258, and C203/C306. Residues 186–306 form the NTR domain; sequence CPPCDNELKS…FMKRMKNHEC (121 aa).

It belongs to the secreted frizzled-related protein (sFRP) family. As to quaternary structure, interacts with WNT8, WNT1, WNT2, WNT4 and FRZD6. Interacts with MYOC. As to expression, highly expressed in kidney and embryonic heart. Also highly expressed in the eye, where it is principally localized to the ciliary body and the lens epithelium. Weaker expression in heart, lung and brain. In the brain, is expressed exclusively in the choroid plexus.

The protein resides in the secreted. In terms of biological role, soluble frizzled-related proteins (sFRPS) function as modulators of Wnt signaling through direct interaction with Wnts. They have a role in regulating cell growth and differentiation in specific cell types. SFRP1 decreases intracellular beta-catenin levels. Has antiproliferative effects on vascular cells, in vitro and in vivo, and can induce, in vivo, an angiogenic response. In vascular cell cycle, delays the G1 phase and entry into the S phase. In kidney development, inhibits tubule formation and bud growth in metanephroi. Inhibits WNT1/WNT4-mediated TCF-dependent transcription. The sequence is that of Secreted frizzled-related protein 1 from Mus musculus (Mouse).